The sequence spans 96 residues: Neurotoxin beta-KTx 31.1 (96 aa).

A signal peptide spans 1–21 (MQAKRTILLLLLLGMVALSSC). Positions 22–29 (GLREKHVQ) are excised as a propeptide. A BetaSPN-type CS-alpha/beta domain is found at 56 to 93 (QYGCPIIKDYCSFHCNDLEKHEGYCHGTKCKCNIPNQY). 3 cysteine pairs are disulfide-bonded: cysteine 59–cysteine 80, cysteine 66–cysteine 85, and cysteine 70–cysteine 87.

Belongs to the long chain scorpion toxin family. Class 1 subfamily. Expressed by the venom gland.

It is found in the secreted. In terms of biological role, inhibits voltage-gated potassium channel. The protein is Neurotoxin beta-KTx 31.1 of Lychas mucronatus (Chinese swimming scorpion).